A 574-amino-acid polypeptide reads, in one-letter code: Probable E3 ubiquitin-protein ligase ipaH4.5 (574 aa).

Residues 1–284 are interaction with target proteins; that stretch reads MKPINNHSFF…YHGPQIYFSM (284 aa). LRR repeat units follow at residues 63–82, 83–104, 105–122, 123–143, 144–165, 166–183, 184–205, 206–223, 224–246, and 247–270; these read REPVLNLSLLKLRSLPPLPL, HIRELNISNNELISLPENSPLL, TELHVNGNNLNILPTLPS, QLIKLNISFNRNLSCLPSLPP, YLQSLSARFNSLETLPELPSTL, TILRIEGNRLTVLPELPH, RLQELFVSGNRLQELPEFPQSL, KYLKVGENQLRRLSRLPQ, ELLALDVSNNLLTSLPENIITLP, and ICTNVNISGNPLSTHVLQSLQRLT. The linker stretch occupies residues 285–292; it reads SDGQQNTL. The tract at residues 293–574 is E3 ubiquitin-protein ligase catalytic domain; sequence HRPLADAVTA…YRQLTDEVLA (282 aa). The region spanning 295–574 is the NEL domain; the sequence is PLADAVTAWF…YRQLTDEVLA (280 aa). C379 serves as the catalytic Glycyl thioester intermediate.

The protein belongs to the LRR-containing bacterial E3 ligase family. In terms of processing, ubiquitinated in the presence of host E1 ubiquitin-activating enzyme, E2 ubiquitin-conjugating enzyme and ubiquitin.

Its subcellular location is the secreted. The protein localises to the host cytoplasm. The catalysed reaction is S-ubiquitinyl-[E2 ubiquitin-conjugating enzyme]-L-cysteine + [acceptor protein]-L-lysine = [E2 ubiquitin-conjugating enzyme]-L-cysteine + N(6)-ubiquitinyl-[acceptor protein]-L-lysine.. Functionally, effector proteins function to alter host cell physiology and promote bacterial survival in host tissues. This protein is an E3 ubiquitin ligase that interferes with host's ubiquitination pathway. This is Probable E3 ubiquitin-protein ligase ipaH4.5 (ipaH4.5) from Shigella flexneri.